The chain runs to 352 residues: E3 ubiquitin-protein ligase RNF146 (352 aa).

An RING-type zinc finger spans residues 36–74 (CAICLQTCVHPVSLPCKHVFCYLCVKGASWLGKRCALCR). Glycyl lysine isopeptide (Lys-Gly) (interchain with G-Cter in ubiquitin) cross-links involve residues K84 and K94. The WWE domain maps to 91 to 167 (EELKAASRGN…EHGRRRKIKR (77 aa)). 3 residues coordinate a glycoprotein: Y107, R110, and W114. K130 is covalently cross-linked (Glycyl lysine isopeptide (Lys-Gly) (interchain with G-Cter in ubiquitin)). Residues Y144, Q153, R163, and K175 each coordinate a glycoprotein. A Glycyl lysine isopeptide (Lys-Gly) (interchain with G-Cter in ubiquitin) cross-link involves residue K175. Disordered regions lie at residues 195 to 242 (SSAD…AGAS), 259 to 293 (ERSH…ASSD), and 317 to 352 (NQTV…VTEV). Low complexity predominate over residues 197–210 (ADGADSGSAHTGAS). The span at 215 to 233 (VPSSTRPLTSVDGQLTSPV) shows a compositional bias: polar residues. A compositionally biased stretch (acidic residues) spans 282–293 (STEETESDASSD). Phosphoserine occurs at positions 288 and 292.

As to quaternary structure, can form homooligomers. Interacts with PARsylated AXIN1, AXIN2, BLZF1, CASC3, H1-2, IPO7, LIG3, NCL, PARP1, XRCC1, XRCC5 and XRCC6. Interacts with DDB1, DHX15, IQGAP1, LRPPRC, PARP2, PRKDC, RUVBL2, TNKS1 and TNKS2. Binding often leads to interactor ubiquitination, in the presence of the appropriate E1 and E2 enzymes, and proteasomal degradation. In terms of processing, ubiquitinated; autoubiquitinated. Autoubiquitination is enhanced upon poly(ADP-ribose)-binding.

Its subcellular location is the cytoplasm. The protein localises to the cytosol. The protein resides in the nucleus. The enzyme catalyses S-ubiquitinyl-[E2 ubiquitin-conjugating enzyme]-L-cysteine + [acceptor protein]-L-lysine = [E2 ubiquitin-conjugating enzyme]-L-cysteine + N(6)-ubiquitinyl-[acceptor protein]-L-lysine.. Its pathway is protein modification; protein ubiquitination. In terms of biological role, E3 ubiquitin-protein ligase that specifically binds poly-ADP-ribosylated (PARsylated) proteins and mediates their ubiquitination and subsequent degradation. May regulate many important biological processes, such as cell survival and DNA damage response. Acts as an activator of the Wnt signaling pathway by mediating the ubiquitination of PARsylated AXIN1 and AXIN2, 2 key components of the beta-catenin destruction complex. Acts in cooperation with tankyrase proteins (TNKS and TNKS2), which mediate PARsylation of target proteins AXIN1, AXIN2, BLZF1, CASC3, TNKS and TNKS2. Recognizes and binds tankyrase-dependent PARsylated proteins via its WWE domain and mediates their ubiquitination, leading to their degradation. Different ubiquitin linkage types have been observed: TNKS2 undergoes ubiquitination at 'Lys-48' and 'Lys-63', while AXIN1 is only ubiquitinated at 'Lys-48'. May regulate TNKS and TNKS2 subcellular location, preventing aggregation at a centrosomal location. Neuroprotective protein. Protects the brain against N-methyl-D-aspartate (NMDA) receptor-mediated glutamate excitotoxicity and ischemia, by interfering with PAR-induced cell death, called parthanatos. Prevents nuclear translocation of AIFM1 in a PAR-binding dependent manner. Does not affect PARP1 activation. Protects against cell death induced by DNA damaging agents, such as N-methyl-N-nitro-N-nitrosoguanidine (MNNG) and rescues cells from G1 arrest. Promotes cell survival after gamma-irradiation. Facilitates DNA repair. The protein is E3 ubiquitin-protein ligase RNF146 (Rnf146) of Rattus norvegicus (Rat).